Reading from the N-terminus, the 168-residue chain is 2-oxo-4-hydroxy-4-carboxy-5-ureidoimidazoline decarboxylase (168 aa).

The Proton donor; for OHCU decarboxylase activity role is filled by His-70. Positions 70–79 (HPDLGERTEM) are enriched in basic and acidic residues. The interval 70-93 (HPDLGERTEMTDASEAEQASAELD) is disordered. Residues Pro-71, 83-87 (SEAEQ), and 118-122 (FVMAV) each bind substrate.

It belongs to the OHCU decarboxylase family.

The enzyme catalyses 5-hydroxy-2-oxo-4-ureido-2,5-dihydro-1H-imidazole-5-carboxylate + H(+) = (S)-allantoin + CO2. Its pathway is purine metabolism; urate degradation; (S)-allantoin from urate: step 3/3. Functionally, catalyzes the stereoselective decarboxylation of 2-oxo-4-hydroxy-4-carboxy-5-ureidoimidazoline (OHCU) to (S)-allantoin. In Haloferax volcanii (strain ATCC 29605 / DSM 3757 / JCM 8879 / NBRC 14742 / NCIMB 2012 / VKM B-1768 / DS2) (Halobacterium volcanii), this protein is 2-oxo-4-hydroxy-4-carboxy-5-ureidoimidazoline decarboxylase.